A 573-amino-acid polypeptide reads, in one-letter code: Zinc finger protein 10 (573 aa).

A KRAB domain is found at 14 to 85 (VTFKDVFVDF…EREIHQETHP (72 aa)). The C2H2-type 1; atypical zinc finger occupies 206-232 (DSCASNSNECGQTFCQNIHLIQFARTH). 9 C2H2-type zinc fingers span residues 265-287 (YECK…QLIH), 293-315 (YECK…QKTH), 321-343 (YECK…QRTH), 349-371 (YTCN…QRTH), 377-399 (YECP…QRTH), 405-427 (YECN…HRIH), 433-455 (FECK…QRTH), 461-483 (YECH…QRIH), and 489-511 (YECC…QRIH). The C2H2-type 11; atypical zinc finger occupies 517-539 (YKCNQCGIIFSQNSPFIVHQIAH).

This sequence belongs to the krueppel C2H2-type zinc-finger protein family. Interacts (via the KRAB domain) with TRIM28 (via the RBCC domain).

The protein resides in the nucleus. Its function is as follows. May be involved in transcriptional regulation. This is Zinc finger protein 10 (ZNF10) from Homo sapiens (Human).